A 251-amino-acid polypeptide reads, in one-letter code: CDP-diacylglycerol pyrophosphatase (251 aa).

A helical transmembrane segment spans residues 4 to 24 (AGLLFLVMIVIAVVAAGIGYW).

The protein belongs to the Cdh family.

The protein localises to the cell inner membrane. The catalysed reaction is a CDP-1,2-diacyl-sn-glycerol + H2O = a 1,2-diacyl-sn-glycero-3-phosphate + CMP + 2 H(+). It functions in the pathway phospholipid metabolism; CDP-diacylglycerol degradation; phosphatidate from CDP-diacylglycerol: step 1/1. The sequence is that of CDP-diacylglycerol pyrophosphatase from Escherichia coli (strain SE11).